A 622-amino-acid polypeptide reads, in one-letter code: Dynein axonemal assembly factor 1 (622 aa).

Positions 1 to 11 (MHPEVSEQQAD) are enriched in polar residues. A disordered region spans residues 1 to 80 (MHPEVSEQQA…ARNDRDDRGP (80 aa)). Basic and acidic residues predominate over residues 32–42 (VRKEEINETKE). Residues 48-59 (STTSCQSQKQQS) are compositionally biased toward low complexity. The segment covering 62–80 (SRLDCRSGYARNDRDDRGP) has biased composition (basic and acidic residues). LRR repeat units follow at residues 101–123 (ALND…EEYT), 124–145 (GLRC…QAQS), 146–167 (ELRC…EPLQ), 168–189 (KLDA…SCLP), 190–211 (VLNT…QHLR), and 215–236 (RLCV…SVLE). The region spanning 249 to 288 (NPVTKHIPNYRRTVTVRLKQLTYLDDRPVFPKDRACAEAW) is the LRRCT domain. The span at 326 to 336 (EERKKARDKGE) shows a compositional bias: basic and acidic residues. 2 disordered regions span residues 326-360 (EERK…PLGE) and 399-431 (EEPD…TDGT). Low complexity-rich tracts occupy residues 337 to 351 (TPLP…TSPE) and 415 to 428 (VATA…VAAT). A Phosphoserine modification is found at Ser349. A phosphoserine mark is found at Ser464 and Ser487. Disordered stretches follow at residues 480–503 (ISSL…EHTP) and 525–622 (RVPL…FGLD). Polar residues predominate over residues 539–550 (APETQGQVFSTT).

It belongs to the DNAAF1 family.

The protein resides in the cell projection. It is found in the cilium. In terms of biological role, cilium-specific protein required for the stability of the ciliary architecture. Plays a role in cytoplasmic preassembly of dynein arms. Involved in regulation of microtubule-based cilia and actin-based brush border microvilli. The chain is Dynein axonemal assembly factor 1 (Dnaaf1) from Peromyscus polionotus (Oldfield mouse).